Here is a 160-residue protein sequence, read N- to C-terminus: 6,7-dimethyl-8-ribityllumazine synthase (160 aa).

Residues F23, 61 to 63, and 85 to 87 contribute to the 5-amino-6-(D-ribitylamino)uracil site; these read SFE and AVI. Residue 90–91 coordinates (2S)-2-hydroxy-3-oxobutyl phosphate; it reads DT. H93 functions as the Proton donor in the catalytic mechanism. F118 serves as a coordination point for 5-amino-6-(D-ribitylamino)uracil. Residue R132 coordinates (2S)-2-hydroxy-3-oxobutyl phosphate.

The protein belongs to the DMRL synthase family.

It carries out the reaction (2S)-2-hydroxy-3-oxobutyl phosphate + 5-amino-6-(D-ribitylamino)uracil = 6,7-dimethyl-8-(1-D-ribityl)lumazine + phosphate + 2 H2O + H(+). It participates in cofactor biosynthesis; riboflavin biosynthesis; riboflavin from 2-hydroxy-3-oxobutyl phosphate and 5-amino-6-(D-ribitylamino)uracil: step 1/2. Its function is as follows. Catalyzes the formation of 6,7-dimethyl-8-ribityllumazine by condensation of 5-amino-6-(D-ribitylamino)uracil with 3,4-dihydroxy-2-butanone 4-phosphate. This is the penultimate step in the biosynthesis of riboflavin. The sequence is that of 6,7-dimethyl-8-ribityllumazine synthase from Parasynechococcus marenigrum (strain WH8102).